The following is an 80-amino-acid chain: MTNTKILEDNISFEEALKELEEIVKKIDNGQESLETAVNSFERGIVLKNHCEKKLKEARLKIEKITKLADSTVVLEETEI.

The protein belongs to the XseB family. Heterooligomer composed of large and small subunits.

The protein resides in the cytoplasm. The enzyme catalyses Exonucleolytic cleavage in either 5'- to 3'- or 3'- to 5'-direction to yield nucleoside 5'-phosphates.. Its function is as follows. Bidirectionally degrades single-stranded DNA into large acid-insoluble oligonucleotides, which are then degraded further into small acid-soluble oligonucleotides. The sequence is that of Exodeoxyribonuclease 7 small subunit from Rickettsia canadensis (strain McKiel).